We begin with the raw amino-acid sequence, 158 residues long: MPAGMSDAAGKTLADFKAPYPEPTSQQRRYVIFLDPKGDSKELNDYKVELIPGRVEKVDGTNVYRMGGNIEERTIDGWGYPYYIVTLTTMSGTLMMPLGDAALKRPRFVAMNTKNLYRYNSRLPIVVYMPKDGELRYRIWTVKSTGSGTAKSTKAREM.

The protein belongs to the protease inhibitor I11 (ecotin) family.

This is Ecotin-like protein 2 from Leishmania major.